The chain runs to 331 residues: 3-dehydrosphinganine reductase TSC10B (331 aa).

Over 1 to 7 (MAAIFSL) the chain is Lumenal. The chain crosses the membrane as a helical span at residues 8–28 (FLFFILFIVSLLIILSFIVRP). The Cytoplasmic portion of the chain corresponds to 29–262 (RSVTIPIKFR…ICFDGIKAGK (234 aa)). The NADPH site is built by Gly-44, Ser-46, Ser-47, Gly-48, Arg-69, Lys-73, and Asp-95. The short motif at 44–48 (GGSSG) is the GXSXG element. Ser-172 functions as the Proton donor in the catalytic mechanism. Residue Tyr-186 is the Proton acceptor of the active site. NADP(+) contacts are provided by Tyr-186 and Lys-190. Lys-190 acts as the Lowers pKa of active site Tyr in catalysis. The chain crosses the membrane as a helical span at residues 263–283 (FTVTCHFIGFLLSIASTGMSP). Residues 284-286 (QGS) are Lumenal-facing. The chain crosses the membrane as a helical span at residues 287 to 307 (FWLALTEVMFGGLIRLASLVF). The Cytoplasmic segment spans residues 308 to 331 (QWQWYKTIEKWSQRNKKEVNSKLA).

This sequence belongs to the short-chain dehydrogenases/reductases (SDR) family. As to expression, expressed in roots, leaves, stems and flowers.

The protein localises to the endoplasmic reticulum membrane. The catalysed reaction is sphinganine + NADP(+) = 3-oxosphinganine + NADPH + H(+). Its pathway is lipid metabolism; sphingolipid metabolism. Functionally, catalyzes the reduction of 3'-oxosphinganine (3-ketodihydrosphingosine/KDS) to sphinganine (dihydrosphingosine/DHS), the second step of de novo sphingolipid biosynthesis. In plants, sphingolipids seems to play a critical role in mineral ion homeostasis, most likely through their involvement in the ion transport functionalities of membrane systems in the root. Is stereospecific for D-erythro-DHS production and does not produce L-threo-DHS. The polypeptide is 3-dehydrosphinganine reductase TSC10B (TSC10B) (Arabidopsis thaliana (Mouse-ear cress)).